We begin with the raw amino-acid sequence, 194 residues long: dTTP/UTP pyrophosphatase (194 aa).

D73 (proton acceptor) is an active-site residue.

The protein belongs to the Maf family. YhdE subfamily. A divalent metal cation serves as cofactor.

The protein resides in the cytoplasm. It carries out the reaction dTTP + H2O = dTMP + diphosphate + H(+). It catalyses the reaction UTP + H2O = UMP + diphosphate + H(+). Functionally, nucleoside triphosphate pyrophosphatase that hydrolyzes dTTP and UTP. May have a dual role in cell division arrest and in preventing the incorporation of modified nucleotides into cellular nucleic acids. This Geotalea uraniireducens (strain Rf4) (Geobacter uraniireducens) protein is dTTP/UTP pyrophosphatase.